Reading from the N-terminus, the 34-residue chain is Photosystem I reaction center subunit XII (34 aa).

The chain crosses the membrane as a helical span at residues 10-32; that stretch reads VFVALVVAAHAAVLALRLSISLY.

This sequence belongs to the PsaM family.

It localises to the cellular thylakoid membrane. The protein is Photosystem I reaction center subunit XII of Parasynechococcus marenigrum (strain WH8102).